Consider the following 407-residue polypeptide: Formate-dependent phosphoribosylglycinamide formyltransferase (407 aa).

N(1)-(5-phospho-beta-D-ribosyl)glycinamide contacts are provided by residues 28 to 29 (EL) and glutamate 88. ATP is bound by residues arginine 121, lysine 162, 167–172 (SSGKGQ), 202–205 (EGFI), and glutamate 210. Residues 126-320 (RLAAEELGVA…EFELHAKAIL (195 aa)) form the ATP-grasp domain. Mg(2+) is bound by residues glutamate 279 and glutamate 291. N(1)-(5-phospho-beta-D-ribosyl)glycinamide-binding positions include aspartate 298, lysine 367, and 374-375 (RR).

Belongs to the PurK/PurT family. In terms of assembly, homodimer.

The catalysed reaction is N(1)-(5-phospho-beta-D-ribosyl)glycinamide + formate + ATP = N(2)-formyl-N(1)-(5-phospho-beta-D-ribosyl)glycinamide + ADP + phosphate + H(+). It functions in the pathway purine metabolism; IMP biosynthesis via de novo pathway; N(2)-formyl-N(1)-(5-phospho-D-ribosyl)glycinamide from N(1)-(5-phospho-D-ribosyl)glycinamide (formate route): step 1/1. Involved in the de novo purine biosynthesis. Catalyzes the transfer of formate to 5-phospho-ribosyl-glycinamide (GAR), producing 5-phospho-ribosyl-N-formylglycinamide (FGAR). Formate is provided by PurU via hydrolysis of 10-formyl-tetrahydrofolate. In Herminiimonas arsenicoxydans, this protein is Formate-dependent phosphoribosylglycinamide formyltransferase.